Consider the following 20-residue polypeptide: Beta-fibrinogenase jerdofibrase (20 aa).

A Peptidase S1 domain is found at 1-20 (VIGGDECNINEHPFLVLVYY).

The protein belongs to the peptidase S1 family. Snake venom subfamily. Monomer. As to expression, expressed by the venom gland.

It is found in the secreted. Inhibited by PMSF and soybean trypsin inhibitor. Partially inhibited by DTT and cysteine. Not affected by EDTA. In terms of biological role, fibrin(ogen)olytic serine protease degrades Bbeta-chain of human fibrinogen (FGB) and shows a lower activity on Aa-chain (FGA). Also degrades fibrin directly. Releases fibrinopeptide B and a small amount of fibrinopeptide A. Has also be shown to catalyze the hydrolysis of some chromogenic substrates such as S2238, S2160, S2302 and S2251. The chain is Beta-fibrinogenase jerdofibrase from Protobothrops jerdonii (Jerdon's pitviper).